A 360-amino-acid polypeptide reads, in one-letter code: Serine/threonine-protein phosphatase 2A activator 2 (360 aa).

It belongs to the PTPA-type PPIase family.

The protein localises to the cytoplasm. It carries out the reaction [protein]-peptidylproline (omega=180) = [protein]-peptidylproline (omega=0). In terms of biological role, PPIases accelerate the folding of proteins. It catalyzes the cis-trans isomerization of proline imidic peptide bonds in oligopeptides. Acts as a regulatory subunit for PP2A-like phosphatases modulating their activity or substrate specificity, probably by inducing a conformational change in the catalytic subunit, a direct target of the PPIase. Can reactivate inactive phosphatase PP2A-phosphatase methylesterase complexes (PP2Ai) in presence of ATP and Mg(2+) by dissociating the inactive form from the complex. The sequence is that of Serine/threonine-protein phosphatase 2A activator 2 (RRD2) from Kluyveromyces lactis (strain ATCC 8585 / CBS 2359 / DSM 70799 / NBRC 1267 / NRRL Y-1140 / WM37) (Yeast).